Consider the following 696-residue polypeptide: ATP-dependent zinc metalloprotease FtsH (696 aa).

Residues 1 to 29 (MWLQVTNCSTLHSSLSYCGANTLSDMAKN) lie on the Cytoplasmic side of the membrane. The helical transmembrane segment at 30–50 (LILWLVIAVVLMSVFQSFGPS) threads the bilayer. The Periplasmic segment spans residues 51–124 (DSAGRQVDYT…LGTPPEEPSL (74 aa)). A helical membrane pass occupies residues 125–145 (LASIFISWFPMLLLIGVWVFF). The Cytoplasmic segment spans residues 146–696 (MRQMQGGGGG…APKEDDKPQA (551 aa)). 219-226 (GPPGTGKT) contacts ATP. Histidine 441 is a Zn(2+) binding site. Residue glutamate 442 is part of the active site. The Zn(2+) site is built by histidine 445 and aspartate 519. A disordered region spans residues 627–696 (RAPKGWGDTD…APKEDDKPQA (70 aa)). The span at 650-696 (PEAKTESAPEAKAEANVETEEKPVAADSEELKPKAEQAPKEDDKPQA) shows a compositional bias: basic and acidic residues.

This sequence in the central section; belongs to the AAA ATPase family. In the C-terminal section; belongs to the peptidase M41 family. As to quaternary structure, homohexamer. Requires Zn(2+) as cofactor.

The protein localises to the cell inner membrane. Its function is as follows. Acts as a processive, ATP-dependent zinc metallopeptidase for both cytoplasmic and membrane proteins. Plays a role in the quality control of integral membrane proteins. The chain is ATP-dependent zinc metalloprotease FtsH from Photobacterium profundum (strain SS9).